We begin with the raw amino-acid sequence, 274 residues long: uncharacterized protein (274 aa).

It is found in the plastid. The protein localises to the chloroplast. This is an uncharacterized protein from Euglena gracilis.